A 431-amino-acid chain; its full sequence is Probable oxidoreductase OrdL (431 aa).

This is Probable oxidoreductase OrdL (ordL) from Haemophilus influenzae (strain ATCC 51907 / DSM 11121 / KW20 / Rd).